The sequence spans 904 residues: Trichohyalin-like protein 1 (904 aa).

One can recognise an EF-hand domain in the interval 48–83; the sequence is CVLHAVEKNSNLLNIDSNGIISFDEFVLAIFNLLNL. Disordered stretches follow at residues 102-792 and 858-890; these read PEKE…CSVE and PYTR…HPQR. A compositionally biased stretch (polar residues) spans 113 to 128; it reads QATTGDGQWTVGTSPT. 5 stretches are compositionally biased toward basic and acidic residues: residues 172–185, 222–240, 268–300, 349–371, and 385–398; these read ASEH…HLEG, TERK…EPAR, ATQR…DEPS, NLGE…ETKD, and SDMR…RGPE. Residues 443-452 are compositionally biased toward polar residues; sequence ETQYLSSEGG. Over residues 524-536 the composition is skewed to acidic residues; that stretch reads VEEEDGYQGEDPE. Polar residues predominate over residues 538 to 554; that stretch reads PFTQSDEGSSETPNSLA. Residues 555-578 are compositionally biased toward low complexity; that stretch reads SEEGNSSSETGELPVQGDSQSQGD. Polar residues predominate over residues 586–598; sequence GGHNNNPDTQRQG. The segment covering 759 to 770 has biased composition (basic and acidic residues); it reads GDQKSPAKKEHN. Residues 771–780 show a composition bias toward polar residues; it reads SSVPWSSLEK. Residues 881–890 are compositionally biased toward basic and acidic residues; the sequence is LEDKQGHPQR.

Belongs to the S-100 family.

The protein is Trichohyalin-like protein 1 (TCHHL1) of Homo sapiens (Human).